Reading from the N-terminus, the 191-residue chain is RNA polymerase sigma factor CnrH (191 aa).

The Polymerase core binding signature appears at 49–62 (DVVQDTFVAAWHAL). The segment at residues 156–175 (QPEAAAVLGLSVKAVEGRIG) is a DNA-binding region (H-T-H motif).

It belongs to the sigma-70 factor family. ECF subfamily.

Functionally, sigma factors are initiation factors that promote the attachment of RNA polymerase to specific initiation sites and are then released. This sigma factor regulates the genes for a membrane-located efflux system that confers resistance to nickel and cobalt. Its function is as follows. CnrH alone is able to activate CNR expression, while both CnrY and CrnX are needed for nickel induction of cnrH. Binds DNA in an RNA polymerase-dependent fashion. CnrH may be controlled by a CnrYX transmembrane anti-sigma factor complex which binds CnrH in the absence of Ni(2+). If Ni(2+) appears in the periplasm, it may be bound by CnrR (CnrX); the signal then would be transmitted by CnrY into the cytoplasm and CnrH would be released. This is RNA polymerase sigma factor CnrH (cnrH) from Cupriavidus metallidurans (strain ATCC 43123 / DSM 2839 / NBRC 102507 / CH34) (Ralstonia metallidurans).